The chain runs to 88 residues: EMBRYO SURROUNDING FACTOR 1-like protein 11 (88 aa).

An N-terminal signal peptide occupies residues 1-23 (MISSSHFAIFCIILVSLFALQQY). Intrachain disulfides connect Cys-44–Cys-59, Cys-49–Cys-78, Cys-57–Cys-74, and Cys-60–Cys-67.

Belongs to the MEG family. As to expression, expressed in stems.

The sequence is that of EMBRYO SURROUNDING FACTOR 1-like protein 11 (ESFL11) from Arabidopsis thaliana (Mouse-ear cress).